The sequence spans 442 residues: Phosphatidylserine synthase 2 (442 aa).

At 1–40 the chain is on the cytoplasmic side; sequence MRRGERRGPAGPLGDGPALGLRRSTESEVYDDGTNTFFWR. A helical membrane pass occupies residues 41 to 61; that stretch reads AHTLTVLFILTCALGYVTLLE. Residues 62–74 lie on the Lumenal side of the membrane; it reads ETPQDTAYNTKRG. A helical transmembrane segment spans residues 75–95; sequence IVASILVFLCFGVTQAKDGPF. Over 96–104 the chain is Cytoplasmic; sequence SRPHPAYWR. Residues 105–125 traverse the membrane as a helical segment; the sequence is FWLCVSVVYELFLIFILFQTV. Residues 126-291 lie on the Lumenal side of the membrane; the sequence is QDGRQFMKYI…EWKPASSLRR (166 aa). N-linked (GlcNAc...) asparagine glycosylation is found at Asn159 and Asn215. A helical transmembrane segment spans residues 292-312; the sequence is WLAVCGIIFVFLLAELNTFYL. Residue Lys313 is a topological domain, cytoplasmic. A helical membrane pass occupies residues 314–334; sequence FVLWMPPEHYLVLLRLVFFVN. Residues 335 to 354 are Lumenal-facing; it reads VGGVAMREIYDFMDDPKFHK. A helical transmembrane segment spans residues 355–375; that stretch reads KLGQQAWLVAAITATEFLIVV. Over 376–381 the chain is Cytoplasmic; it reads KYDPYT. Residues 382–402 traverse the membrane as a helical segment; that stretch reads LTLSLPFYITQCWILGIILVL. Topologically, residues 403 to 442 are lumenal; sequence TWTAWRFFIRDITLRYKEIRRQKQEHKYEKDKCLSNGDGH.

This sequence belongs to the phosphatidyl serine synthase family.

It is found in the endoplasmic reticulum membrane. The enzyme catalyses a 1,2-diacyl-sn-glycero-3-phosphoethanolamine + L-serine = a 1,2-diacyl-sn-glycero-3-phospho-L-serine + ethanolamine. It carries out the reaction 1-hexadecanoyl-2-(9Z-octadecenoyl)-sn-glycero-3-phosphoethanolamine + L-serine = 1-hexadecanoyl-2-(9Z-octadecenoyl)-sn-glycero-3-phospho-L-serine + ethanolamine. It catalyses the reaction 1-hexadecanoyl-2-(4Z,7Z,10Z,13Z,16Z,19Z-docosahexaenoyl)-sn-glycero-3-phosphoethanolamine + L-serine = 1-hexadecanoyl-2-(4Z,7Z,10Z,13Z,16Z,19Z-docosahexaenoyl)-sn-glycero-3-phosphoserine + ethanolamine. The catalysed reaction is 1-octadecanoyl-2-(5Z,8Z,11Z,14Z)-eicosatetraenoyl-sn-glycero-3-phosphoethanolamine + L-serine = 1-octadecanoyl-2-(5Z,8Z,11Z,14Z)-eicosatetraenoyl-sn-glycero-3-phosphoserine + ethanolamine. The enzyme catalyses 1-octadecanoyl-2-(4Z,7Z,10Z,13Z,16Z,19Z-docosahexaenoyl)-sn-glycero-3-phosphoethanolamine + L-serine = 1-octadecanoyl-2-(4Z,7Z,10Z,13Z,16Z,19Z-docosahexaenoyl)-sn-glycero-3-phosphoserine + ethanolamine. It carries out the reaction 1-(1Z-octadecenyl)-2-(4Z,7Z,10Z,13Z,16Z,19Z-docosahexaenoyl)-sn-glycero-3-phosphoethanolamine + L-serine = 1-(1Z-octadecenyl)-2-(4Z,7Z,10Z,13Z,16Z,19Z-docosahexaenoyl)-sn-glycero-3-phospho-L-serine + ethanolamine. It catalyses the reaction 1-octadecanoyl-2-(9Z-octadecenoyl)-sn-glycero-3-phosphoethanolamine + L-serine = 1-octadecanoyl-2-(9Z-octadecenoyl)-sn-glycero-3-phospho-L-serine + ethanolamine. The catalysed reaction is 1-(1Z-octadecenyl)-2-(9Z-octadecenoyl)-sn-glycero-3-phosphoethanolamine + L-serine = 1-(1Z-octadecenyl)-2-(9Z-octadecenoyl)-sn-glycero-3-phospho-L-serine + ethanolamine. The enzyme catalyses 1-(1Z-octadecenyl)-2-(5Z,8Z,11Z,14Z- eicosatetraenoyl)-sn-glycero-3-phosphoethanolamine + L-serine = 1-(1Z-octadecenyl)-2-(5Z,8Z,11Z,14Z-eicosatetraenoyl)-sn-glycero-3-phospho-L-serine + ethanolamine. It functions in the pathway phospholipid metabolism; phosphatidylserine biosynthesis. In terms of biological role, catalyzes a base-exchange reaction in which the polar head group of phosphatidylethanolamine (PE) or phosphatidylcholine (PC) is replaced by L-serine. Catalyzes the conversion of phosphatatidylethanolamine and does not act on phosphatidylcholine. Can utilize both phosphatidylethanolamine (PE) plasmalogen and diacyl PE as substrate and the latter is six times better utilized, indicating the importance of an ester linkage at the sn-1 position. Although it shows no sn-1 fatty acyl preference, exhibits significant preference towards docosahexaenoic acid (22:6n-3) compared with 18:1 or 20:4 at the sn-2 position. The polypeptide is Phosphatidylserine synthase 2 (PTDSS1) (Gallus gallus (Chicken)).